A 185-amino-acid polypeptide reads, in one-letter code: MISSNDFRPGVTIELDGSVWRVVEFLHVKPGKGSAFVRTKLKNVQNGNVVERTFRAGETVPQATLDKRAMQHTYKDSDQFVFMDMETYEETNLSSEQIGERVKYLNEGMEVNVIMWGEQVIEVELPNSVVLEVIETDPGVKGDTATGGSKPATVETGAQIMVPLFISKGERIKIDTRNDSYLGRE.

It belongs to the elongation factor P family.

The protein resides in the cytoplasm. Its pathway is protein biosynthesis; polypeptide chain elongation. Its function is as follows. Involved in peptide bond synthesis. Stimulates efficient translation and peptide-bond synthesis on native or reconstituted 70S ribosomes in vitro. Probably functions indirectly by altering the affinity of the ribosome for aminoacyl-tRNA, thus increasing their reactivity as acceptors for peptidyl transferase. In Trichodesmium erythraeum (strain IMS101), this protein is Elongation factor P.